The primary structure comprises 248 residues: Ubiquinone biosynthesis O-methyltransferase (248 aa).

Arginine 41, glycine 72, aspartate 93, and methionine 136 together coordinate S-adenosyl-L-methionine.

This sequence belongs to the methyltransferase superfamily. UbiG/COQ3 family.

It catalyses the reaction a 3-demethylubiquinol + S-adenosyl-L-methionine = a ubiquinol + S-adenosyl-L-homocysteine + H(+). The catalysed reaction is a 3-(all-trans-polyprenyl)benzene-1,2-diol + S-adenosyl-L-methionine = a 2-methoxy-6-(all-trans-polyprenyl)phenol + S-adenosyl-L-homocysteine + H(+). Its pathway is cofactor biosynthesis; ubiquinone biosynthesis. O-methyltransferase that catalyzes the 2 O-methylation steps in the ubiquinone biosynthetic pathway. This is Ubiquinone biosynthesis O-methyltransferase from Brucella anthropi (strain ATCC 49188 / DSM 6882 / CCUG 24695 / JCM 21032 / LMG 3331 / NBRC 15819 / NCTC 12168 / Alc 37) (Ochrobactrum anthropi).